The sequence spans 226 residues: Amelogenin (226 aa).

Residues 1-16 (MGTWILFACLLGTAFA) form the signal peptide. At serine 32 the chain carries Phosphoserine. The tract at residues 86–196 (QQHPPSHTTL…LPPQQALPPM (111 aa)) is disordered. 2 stretches are compositionally biased toward low complexity: residues 88–120 (HPPS…MPVP) and 137–182 (PTSQ…SPLH). A compositionally biased stretch (pro residues) spans 183 to 192 (PIQPLPPQQA).

This sequence belongs to the amelogenin family.

It is found in the secreted. The protein resides in the extracellular space. It localises to the extracellular matrix. Functionally, plays a role in the biomineralization of teeth. Seems to regulate the formation of crystallites during the secretory stage of tooth enamel development. Thought to play a major role in the structural organization and mineralization of developing enamel. This is Amelogenin (AMEL) from Cavia porcellus (Guinea pig).